Here is a 257-residue protein sequence, read N- to C-terminus: Imidazole glycerol phosphate synthase subunit HisF (257 aa).

Active-site residues include aspartate 11 and aspartate 130.

Belongs to the HisA/HisF family. Heterodimer of HisH and HisF.

The protein localises to the cytoplasm. It catalyses the reaction 5-[(5-phospho-1-deoxy-D-ribulos-1-ylimino)methylamino]-1-(5-phospho-beta-D-ribosyl)imidazole-4-carboxamide + L-glutamine = D-erythro-1-(imidazol-4-yl)glycerol 3-phosphate + 5-amino-1-(5-phospho-beta-D-ribosyl)imidazole-4-carboxamide + L-glutamate + H(+). Its pathway is amino-acid biosynthesis; L-histidine biosynthesis; L-histidine from 5-phospho-alpha-D-ribose 1-diphosphate: step 5/9. Functionally, IGPS catalyzes the conversion of PRFAR and glutamine to IGP, AICAR and glutamate. The HisF subunit catalyzes the cyclization activity that produces IGP and AICAR from PRFAR using the ammonia provided by the HisH subunit. The chain is Imidazole glycerol phosphate synthase subunit HisF from Prochlorococcus marinus (strain SARG / CCMP1375 / SS120).